Reading from the N-terminus, the 700-residue chain is Phosphoribosylformylglycinamidine synthase subunit PurL (700 aa).

Histidine 34 is a catalytic residue. Tyrosine 37 is a binding site for ATP. Mg(2+) is bound at residue glutamate 79. Substrate-binding positions include 80–83 (SHNH) and arginine 102. Histidine 81 functions as the Proton acceptor in the catalytic mechanism. Mg(2+) is bound at residue aspartate 103. Glutamine 227 lines the substrate pocket. Aspartate 255 contributes to the Mg(2+) binding site. 299 to 301 (ESQ) provides a ligand contact to substrate. ATP contacts are provided by aspartate 476 and glycine 513. Position 514 (asparagine 514) interacts with Mg(2+). Serine 516 is a binding site for substrate.

Belongs to the FGAMS family. In terms of assembly, monomer. Part of the FGAM synthase complex composed of 1 PurL, 1 PurQ and 2 PurS subunits.

The protein localises to the cytoplasm. It catalyses the reaction N(2)-formyl-N(1)-(5-phospho-beta-D-ribosyl)glycinamide + L-glutamine + ATP + H2O = 2-formamido-N(1)-(5-O-phospho-beta-D-ribosyl)acetamidine + L-glutamate + ADP + phosphate + H(+). Its pathway is purine metabolism; IMP biosynthesis via de novo pathway; 5-amino-1-(5-phospho-D-ribosyl)imidazole from N(2)-formyl-N(1)-(5-phospho-D-ribosyl)glycinamide: step 1/2. Functionally, part of the phosphoribosylformylglycinamidine synthase complex involved in the purines biosynthetic pathway. Catalyzes the ATP-dependent conversion of formylglycinamide ribonucleotide (FGAR) and glutamine to yield formylglycinamidine ribonucleotide (FGAM) and glutamate. The FGAM synthase complex is composed of three subunits. PurQ produces an ammonia molecule by converting glutamine to glutamate. PurL transfers the ammonia molecule to FGAR to form FGAM in an ATP-dependent manner. PurS interacts with PurQ and PurL and is thought to assist in the transfer of the ammonia molecule from PurQ to PurL. The sequence is that of Phosphoribosylformylglycinamidine synthase subunit PurL from Halobacterium salinarum (strain ATCC 29341 / DSM 671 / R1).